Here is a 306-residue protein sequence, read N- to C-terminus: Homoserine kinase (306 aa).

95–105 (PQSRGLGSSAA) contacts ATP.

Belongs to the GHMP kinase family. Homoserine kinase subfamily.

The protein localises to the cytoplasm. It catalyses the reaction L-homoserine + ATP = O-phospho-L-homoserine + ADP + H(+). It participates in amino-acid biosynthesis; L-threonine biosynthesis; L-threonine from L-aspartate: step 4/5. Its function is as follows. Catalyzes the ATP-dependent phosphorylation of L-homoserine to L-homoserine phosphate. This chain is Homoserine kinase, found in Corynebacterium urealyticum (strain ATCC 43042 / DSM 7109).